The primary structure comprises 205 residues: MTGKFITFEGIDGAGKSTHLAWFAQQLEARLAPQGRKVVVTREPGGTPLGERLREVLLHERMHLETEALLMFASRREHIAEVIQPALERGDWVISDRFTDATFAYQGGGRGLAIERLEALEQWVQQGLQPTRTLLFDLAPEVAAARLADARTPDKFEAESAQFFVRTRAEYLRRAAAEPGRFVVIDAARARDDIRKDLEKLLASL.

10-17 is an ATP binding site; that stretch reads GIDGAGKS.

This sequence belongs to the thymidylate kinase family.

It catalyses the reaction dTMP + ATP = dTDP + ADP. Functionally, phosphorylation of dTMP to form dTDP in both de novo and salvage pathways of dTTP synthesis. The polypeptide is Thymidylate kinase (Ralstonia nicotianae (strain ATCC BAA-1114 / GMI1000) (Ralstonia solanacearum)).